Consider the following 456-residue polypeptide: Glycerol-3-phosphate acyltransferase 4 (456 aa).

The N-terminal stretch at 1–37 (MFLLLPFDSLIVSLLGISLTVLFTLLLVFIIVPAVFG) is a signal peptide. 2 consecutive transmembrane segments (helical) span residues 156-176 (ISLR…CLLL) and 180-200 (IALA…VGYL). N-linked (GlcNAc...) asparagine glycosylation occurs at Asn247. Residues 248 to 253 (HTSPID) carry the HXXXXD motif motif. 3 N-linked (GlcNAc...) asparagine glycosylation sites follow: Asn327, Asn328, and Asn362.

The protein belongs to the 1-acyl-sn-glycerol-3-phosphate acyltransferase family.

The protein localises to the endoplasmic reticulum membrane. It catalyses the reaction sn-glycerol 3-phosphate + an acyl-CoA = a 1-acyl-sn-glycero-3-phosphate + CoA. The enzyme catalyses dodecanoyl-CoA + sn-glycerol 3-phosphate = 1-dodecanoyl-sn-glycerol 3-phosphate + CoA. It carries out the reaction sn-glycerol 3-phosphate + hexadecanoyl-CoA = 1-hexadecanoyl-sn-glycero-3-phosphate + CoA. The catalysed reaction is sn-glycerol 3-phosphate + octadecanoyl-CoA = 1-octadecanoyl-sn-glycero-3-phosphate + CoA. It catalyses the reaction sn-glycerol 3-phosphate + (9Z)-octadecenoyl-CoA = 1-(9Z-octadecenoyl)-sn-glycero-3-phosphate + CoA. The enzyme catalyses (9Z,12Z)-octadecadienoyl-CoA + sn-glycerol 3-phosphate = 1-(9Z,12Z)-octadecadienoyl-sn-glycero-3-phosphate + CoA. Its pathway is phospholipid metabolism; CDP-diacylglycerol biosynthesis; CDP-diacylglycerol from sn-glycerol 3-phosphate: step 1/3. Converts glycerol-3-phosphate to 1-acyl-sn-glycerol-3-phosphate (lysophosphatidic acid or LPA) by incorporating an acyl moiety at the sn-1 position of the glycerol backbone. Active against both saturated and unsaturated long-chain fatty acyl-CoAs. Protects cells against lipotoxicity. In Bos taurus (Bovine), this protein is Glycerol-3-phosphate acyltransferase 4.